We begin with the raw amino-acid sequence, 232 residues long: Protein DOG1-like 4 (232 aa).

The 221-residue stretch at 9–229 folds into the DOG1 domain; sequence EEKFLEFYES…RRWGNRRHYV (221 aa).

The chain is Protein DOG1-like 4 from Arabidopsis thaliana (Mouse-ear cress).